The chain runs to 339 residues: Dihydroorotate dehydrogenase (quinone) (339 aa).

FMN is bound by residues Ala-64–Lys-68 and Thr-88. A substrate-binding site is contributed by Lys-68. Asn-113–Phe-117 provides a ligand contact to substrate. FMN contacts are provided by Asn-141 and Asn-174. Asn-174 contributes to the substrate binding site. Ser-177 acts as the Nucleophile in catalysis. Asn-179 contacts substrate. Positions 219 and 247 each coordinate FMN. Asn-248–Thr-249 is a substrate binding site. Residues Gly-270, Gly-299, and Tyr-320–Ser-321 contribute to the FMN site.

The protein belongs to the dihydroorotate dehydrogenase family. Type 2 subfamily. As to quaternary structure, monomer. FMN is required as a cofactor.

Its subcellular location is the cell membrane. It carries out the reaction (S)-dihydroorotate + a quinone = orotate + a quinol. The protein operates within pyrimidine metabolism; UMP biosynthesis via de novo pathway; orotate from (S)-dihydroorotate (quinone route): step 1/1. Its function is as follows. Catalyzes the conversion of dihydroorotate to orotate with quinone as electron acceptor. This Pasteurella multocida (strain Pm70) protein is Dihydroorotate dehydrogenase (quinone) (pyrD).